The sequence spans 338 residues: UPF0104 membrane protein MTH_1261 (338 aa).

8 helical membrane passes run 6–26 (AILIVIGVVALAAMILIIGPG), 36–56 (DPVYVLMAVVLEFIILALFTL), 124–144 (LDTFPFIFLAVLTIIGIVLYF), 149–169 (WILAALIASVVIIVVAFFLAL), 231–251 (ISFLIWILEIIRVYLIFTAFG), 254–274 (ISLLVIAEVFILATLIGMIPL), 275–295 (LPGGLGAVDGIMIVFYSYAGV), and 310–330 (ISFWMISAMGVAAIPYFGSSV).

It belongs to the UPF0104 family.

The protein resides in the cell membrane. In Methanothermobacter thermautotrophicus (strain ATCC 29096 / DSM 1053 / JCM 10044 / NBRC 100330 / Delta H) (Methanobacterium thermoautotrophicum), this protein is UPF0104 membrane protein MTH_1261.